The following is a 417-amino-acid chain: NADH-quinone oxidoreductase subunit D (417 aa).

Belongs to the complex I 49 kDa subunit family. NDH-1 is composed of 14 different subunits. Subunits NuoB, C, D, E, F, and G constitute the peripheral sector of the complex.

The protein resides in the cell inner membrane. It carries out the reaction a quinone + NADH + 5 H(+)(in) = a quinol + NAD(+) + 4 H(+)(out). Its function is as follows. NDH-1 shuttles electrons from NADH, via FMN and iron-sulfur (Fe-S) centers, to quinones in the respiratory chain. The immediate electron acceptor for the enzyme in this species is believed to be ubiquinone. Couples the redox reaction to proton translocation (for every two electrons transferred, four hydrogen ions are translocated across the cytoplasmic membrane), and thus conserves the redox energy in a proton gradient. The protein is NADH-quinone oxidoreductase subunit D of Burkholderia ambifaria (strain MC40-6).